We begin with the raw amino-acid sequence, 273 residues long: tRNA (guanine-N(7)-)-methyltransferase A (273 aa).

Residues G86, E109, R111, N142, A143, and L162 each contribute to the S-adenosyl-L-methionine site. The active site involves D165. The segment at 166–174 (PHFKKTKHK) is alphaC helix. S-adenosyl-L-methionine contacts are provided by T240 and E242. Residues 240–248 (TEEGKKVQR) are alpha6 helix.

The protein belongs to the class I-like SAM-binding methyltransferase superfamily. TrmB family. In terms of assembly, catalytic component of the METTL1-WDR4 complex, composed of mettl1 and wdr4.

It localises to the nucleus. It carries out the reaction guanosine(46) in tRNA + S-adenosyl-L-methionine = N(7)-methylguanosine(46) in tRNA + S-adenosyl-L-homocysteine. The catalysed reaction is a guanosine in mRNA + S-adenosyl-L-methionine = an N(7)-methylguanosine in mRNA + S-adenosyl-L-homocysteine. It catalyses the reaction a guanosine in miRNA + S-adenosyl-L-methionine = an N(7)-methylguanosine in miRNA + S-adenosyl-L-homocysteine. It participates in tRNA modification; N(7)-methylguanine-tRNA biosynthesis. In terms of biological role, catalytic component of METTL1-WDR4 methyltransferase complex that mediates the formation of N(7)-methylguanine in a subset of RNA species, such as tRNAs, mRNAs and microRNAs (miRNAs). Catalyzes the formation of N(7)-methylguanine at position 46 (m7G46) in a large subset of tRNAs that contain the 5'-RAGGU-3' motif within the variable loop. M7G46 interacts with C13-G22 in the D-loop to stabilize tRNA tertiary structure and protect tRNAs from decay. Also acts as a methyltransferase for a subset of internal N(7)-methylguanine in mRNAs. Internal N(7)-methylguanine methylation of mRNAs in response to stress promotes their relocalization to stress granules, thereby suppressing their translation. Also methylates a specific subset of miRNAs. The chain is tRNA (guanine-N(7)-)-methyltransferase A (mettl1-A) from Xenopus tropicalis (Western clawed frog).